Reading from the N-terminus, the 49-residue chain is LAKTNFPLNFPIHVRDAGVQWSPLGRLTTGADVRHEIPARVGHRLARWA.

As to quaternary structure, homooligomer. Glycosylated.

Beta-galactoside specific lectin. Has a hemagglutinating activity on erythrocytes. The polypeptide is Agglutinin-1 (Pomacea flagellata (Apple snail)).